A 245-amino-acid polypeptide reads, in one-letter code: 1-(5-phosphoribosyl)-5-[(5-phosphoribosylamino)methylideneamino] imidazole-4-carboxamide isomerase (245 aa).

Residue Asp7 is the Proton acceptor of the active site. Asp129 (proton donor) is an active-site residue.

It belongs to the HisA/HisF family.

The protein localises to the cytoplasm. It carries out the reaction 1-(5-phospho-beta-D-ribosyl)-5-[(5-phospho-beta-D-ribosylamino)methylideneamino]imidazole-4-carboxamide = 5-[(5-phospho-1-deoxy-D-ribulos-1-ylimino)methylamino]-1-(5-phospho-beta-D-ribosyl)imidazole-4-carboxamide. It functions in the pathway amino-acid biosynthesis; L-histidine biosynthesis; L-histidine from 5-phospho-alpha-D-ribose 1-diphosphate: step 4/9. The protein is 1-(5-phosphoribosyl)-5-[(5-phosphoribosylamino)methylideneamino] imidazole-4-carboxamide isomerase of Shewanella pealeana (strain ATCC 700345 / ANG-SQ1).